Here is a 374-residue protein sequence, read N- to C-terminus: Transaldolase (374 aa).

The active-site Schiff-base intermediate with substrate is the Lys140.

It belongs to the transaldolase family. Type 2 subfamily.

It localises to the cytoplasm. The enzyme catalyses D-sedoheptulose 7-phosphate + D-glyceraldehyde 3-phosphate = D-erythrose 4-phosphate + beta-D-fructose 6-phosphate. The protein operates within carbohydrate degradation; pentose phosphate pathway; D-glyceraldehyde 3-phosphate and beta-D-fructose 6-phosphate from D-ribose 5-phosphate and D-xylulose 5-phosphate (non-oxidative stage): step 2/3. Transaldolase is important for the balance of metabolites in the pentose-phosphate pathway. This is Transaldolase from Renibacterium salmoninarum (strain ATCC 33209 / DSM 20767 / JCM 11484 / NBRC 15589 / NCIMB 2235).